The chain runs to 186 residues: Sec-independent protein translocase protein TatB (186 aa).

The chain crosses the membrane as a helical span at residues 1–21 (MFDIGFSELILLMVLGLVVLG). The tract at residues 162-186 (LSSYYPPDDIEIAPASKSQSSKTKS) is disordered. The span at 177–186 (SKSQSSKTKS) shows a compositional bias: polar residues.

Belongs to the TatB family. In terms of assembly, the Tat system comprises two distinct complexes: a TatABC complex, containing multiple copies of TatA, TatB and TatC subunits, and a separate TatA complex, containing only TatA subunits. Substrates initially bind to the TatABC complex, which probably triggers association of the separate TatA complex to form the active translocon.

It localises to the cell inner membrane. Functionally, part of the twin-arginine translocation (Tat) system that transports large folded proteins containing a characteristic twin-arginine motif in their signal peptide across membranes. Together with TatC, TatB is part of a receptor directly interacting with Tat signal peptides. TatB may form an oligomeric binding site that transiently accommodates folded Tat precursor proteins before their translocation. This Haemophilus influenzae (strain 86-028NP) protein is Sec-independent protein translocase protein TatB.